The sequence spans 220 residues: MDSRCFGFFFTLLSLNVIVLAYDPDTLQDLCVADRTSGIKVNGFTCKPESNITASDFFFAGIGKPAVVNNTVGSAVTGANVEKIAGLNTLGVSLARIDYAPGGLNPPHTHPRATEVIFVLEGELDVGFITTANKLFAKTVKKGEVFVFPRGLIHYQKNNDKAKPASVISAFNSQLPGTQSIAATLFTATPAIPDHVLTTTFQIGTKEIEKIKSKFAPKKV.

The first 21 residues, 1 to 21, serve as a signal peptide directing secretion; it reads MDSRCFGFFFTLLSLNVIVLA. The cysteines at positions 31 and 46 are disulfide-linked. N-linked (GlcNAc...) asparagine glycosylation is found at Asn51 and Asn69. The Cupin type-1 domain maps to 58–209; that stretch reads FFAGIGKPAV…TFQIGTKEIE (152 aa). Residues His108, His110, Glu115, and His154 each contribute to the Mn(2+) site.

Belongs to the germin family. As to quaternary structure, oligomer (believed to be a pentamer but probably hexamer).

It localises to the secreted. It is found in the extracellular space. Its subcellular location is the apoplast. Functionally, may play a role in plant defense. Probably has no oxalate oxidase activity even if the active site is conserved. The protein is Germin-like protein subfamily 2 member 4 (GLP10) of Arabidopsis thaliana (Mouse-ear cress).